The primary structure comprises 421 residues: Replication-associated recombination protein A (421 aa).

45–52 serves as a coordination point for ATP; the sequence is GPPGIGKT.

Belongs to the AAA ATPase family. RarA/MGS1/WRNIP1 subfamily. Homotetramer. Interacts with single-stranded binding protein SsbA. May interact with PriA.

It localises to the cytoplasm. The protein localises to the nucleoid. SsDNA-dependent ATP hydrolysis is stimulated by single-stranded binding protein SsbA but not by SsbB; in the presence of SsbB, ssDNA secondary structure is removed and RarA's ATPase activity is decreased. The C-terminal 9 residues of SsbA are sufficient to stimulate ATPase activity. In terms of biological role, plays a role in recombination-dependent DNA replication. Positively affects the formation of RecA threads during response to DNA damage, directly or indirectly counteracting the negative RecA modulators RecX and RecU. Stabilizes a RecA-ssDNA complex. In vitro, in the presence of SsbA, inhibits PriA-dependent DNA replication restart of both leading and lagging strands; elongation is insensitive to RarA. Plays a role in response to DNA damage, localizes to the replication fork but also to DNA elsewhere in the cell. Probably required for repair of single-stranded nicks generated by H(2)O(2). Epistatic to RecA, partially represses deletions of the error-prone translesion DNA polymerases (dinB1 and dinB2), genetically interacts with replicative helicase loaders dnaB and dnaD. Epistatic to recF and recO mutations upon DNA damage. A DNA-dependent ATPase stimulated by hairpin structures in circular single-stranded (ss)DNA or ssDNA-dsDNA junctions, by blunt end and 5'-tailed dsDNA and by single-stranded binding protein SsbA protein bound to ssDNA. Preferentially binds ssDNA and replication-fork structures; SsbA stimulates binding to ssDNA. Addition of ATP to the protein has no visible effect in vitro. The sequence is that of Replication-associated recombination protein A from Bacillus subtilis (strain 168).